A 500-amino-acid chain; its full sequence is Probable cytosol aminopeptidase (500 aa).

Positions 264 and 269 each coordinate Mn(2+). Lysine 276 is a catalytic residue. 3 residues coordinate Mn(2+): aspartate 287, aspartate 346, and glutamate 348. Residue arginine 350 is part of the active site.

It belongs to the peptidase M17 family. Mn(2+) serves as cofactor.

It is found in the cytoplasm. The catalysed reaction is Release of an N-terminal amino acid, Xaa-|-Yaa-, in which Xaa is preferably Leu, but may be other amino acids including Pro although not Arg or Lys, and Yaa may be Pro. Amino acid amides and methyl esters are also readily hydrolyzed, but rates on arylamides are exceedingly low.. The enzyme catalyses Release of an N-terminal amino acid, preferentially leucine, but not glutamic or aspartic acids.. Its function is as follows. Presumably involved in the processing and regular turnover of intracellular proteins. Catalyzes the removal of unsubstituted N-terminal amino acids from various peptides. The protein is Probable cytosol aminopeptidase of Afipia carboxidovorans (strain ATCC 49405 / DSM 1227 / KCTC 32145 / OM5) (Oligotropha carboxidovorans).